Reading from the N-terminus, the 305-residue chain is HTH-type transcriptional activator BauR (305 aa).

An HTH lysR-type domain is found at 15 to 72 (FDIRLLRIFKTIVECGSFSAAESTLGLSRSAISLHMGDLEKRLGMRLCQRGRAGFALT).

This sequence belongs to the LysR transcriptional regulatory family.

Involved in the degradation of beta-alanine. BauR activates the transcription of the bauABCD operon. In Pseudomonas aeruginosa (strain ATCC 15692 / DSM 22644 / CIP 104116 / JCM 14847 / LMG 12228 / 1C / PRS 101 / PAO1), this protein is HTH-type transcriptional activator BauR (bauR).